Reading from the N-terminus, the 778-residue chain is Degenerin deg-1 (778 aa).

Residues 1–82 (MSNHHSKTKK…IARNSFSKLM (82 aa)) lie on the Cytoplasmic side of the membrane. A helical membrane pass occupies residues 83–103 (WGLIIFSFLLMFAYQASKLIF). The Extracellular segment spans residues 104-711 (KFSAHEKITD…LVNLIADFGG (608 aa)). Basic and acidic residues predominate over residues 154–165 (NAKTHSKSEGEK). 2 disordered regions span residues 154 to 180 (NAKTHSKSEGEKKKPKVSRKQHSDASQ) and 201 to 220 (SNKTLQSQNKSGRRRSQRSI). Residues Asn202, Asn209, Asn272, and Asn342 are each glycosylated (N-linked (GlcNAc...) asparagine). A compositionally biased stretch (low complexity) spans 346-369 (TSTTTTTTTTPPPTTTSTTTTTTT). Residues 346-380 (TSTTTTTTTTPPPTTTSTTTTTTTTPPPTTTARPN) form a disordered region. 3 N-linked (GlcNAc...) asparagine glycosylation sites follow: Asn473, Asn492, and Asn606. A helical transmembrane segment spans residues 712–732 (HLGLWLGFSVITVMEVCVLLV). Residues 733–778 (DMISLFFKSRHEEKLLRQSTKRKDVPEDKRQITVGSGRKSDAFVSI) lie on the Cytoplasmic side of the membrane.

It belongs to the amiloride-sensitive sodium channel (TC 1.A.6) family.

It is found in the membrane. Its function is as follows. Probable sodium channel subunit. Required by a subset of neurons. This chain is Degenerin deg-1, found in Caenorhabditis elegans.